A 279-amino-acid polypeptide reads, in one-letter code: Nitrate import permease protein NrtB (279 aa).

In terms of domain architecture, ABC transmembrane type-1 spans 86-270 (IAASLQRVAV…LLNALVGFIA (185 aa)). Transmembrane regions (helical) follow at residues 98-118 (LMAAIAGIALGILIGVSVLMF), 124-144 (IFQVLRTVPPLAWLPISLAAF), 151-171 (AIFVIFITAIWPIIINTAVGV), 196-216 (VLLPATVPYIFTGLKIAIGLS), 217-237 (WLAIVAAEMLTGGVGIGFFIW), and 249-269 (ILAIIYVGLVGLLLNALVGFI).

The protein belongs to the binding-protein-dependent transport system permease family. CysTW subfamily. The complex is composed of two ATP-binding proteins (NrtC and NrtD), two transmembrane proteins (NrtB) and a solute-binding protein (NrtA).

The protein resides in the cell inner membrane. In terms of biological role, part of the ABC transporter complex NrtABCD involved in nitrate uptake. The complex is probably also involved in nitrite transport. Probably responsible for the translocation of the substrate across the membrane. The polypeptide is Nitrate import permease protein NrtB (Leptolyngbya laminosa (Phormidium laminosum)).